The sequence spans 233 residues: Large ribosomal subunit protein eL6y (233 aa).

Basic and acidic residues predominate over residues 48–72; that stretch reads HDAKSKVDAPVEKPPKFYPAEDVKK. Residues 48–82 are disordered; that stretch reads HDAKSKVDAPVEKPPKFYPAEDVKKPLPNRRTAKP.

Belongs to the eukaryotic ribosomal protein eL6 family.

In Arabidopsis thaliana (Mouse-ear cress), this protein is Large ribosomal subunit protein eL6y (RPL6B).